The primary structure comprises 462 residues: Toxin CfTX-2 (462 aa).

The first 17 residues, 1-17 (MILVSLLPLLFMTGIAS), serve as a signal peptide directing secretion.

This sequence belongs to the jellyfish toxin family. Type I subfamily. In terms of assembly, oligomer. Contains disulfide bonds. In terms of tissue distribution, nematocytes.

The protein localises to the secreted. The protein resides in the nematocyst. It is found in the target cell membrane. Its function is as follows. May cause profound effects on the cardiovascular system of anesthetized rats (at 25 ug/kg), since the fraction containing this toxin and CfTX-1 produces an initial increase in mean arterial pressure, followed by cardiovascular collapse in all animals within 1 minute of injection. To note, the same fraction does not induce significant change in heart rate. Has weak hemolytic activity. Is lethal to crayfish. Causes cutaneous inflammation in humans. May act as a pore-forming toxin, disrupting normal transmembrane ion concentration gradients in susceptible cells. The protein is Toxin CfTX-2 of Chironex fleckeri (Australian box jellyfish).